A 129-amino-acid polypeptide reads, in one-letter code: 3-aminoacrylate deaminase RutC (129 aa).

This sequence belongs to the RutC family.

It carries out the reaction (Z)-3-aminoacrylate + H2O + H(+) = 3-oxopropanoate + NH4(+). Its function is as follows. Involved in pyrimidine catabolism. Catalyzes the deamination of 3-aminoacrylate to malonic semialdehyde, a reaction that can also occur spontaneously. RutC may facilitate the reaction and modulate the metabolic fitness, rather than catalyzing essential functions. The chain is 3-aminoacrylate deaminase RutC from Rhizobium rhizogenes (strain K84 / ATCC BAA-868) (Agrobacterium radiobacter).